Consider the following 142-residue polypeptide: Extracellular globin-1 (142 aa).

In terms of domain architecture, Globin spans 1–142 (ECLVTEGLKV…DQIIDGIKDI (142 aa)). The cysteines at positions 2 and 131 are disulfide-linked. Residue His-94 participates in heme b binding.

The protein belongs to the globin family. The extracellular hemoglobin of the earthworm consists of 12 subunits that have a hexagonal bilayer structure with a molecular weight near 3.8 million. Each one-twelfth subunit is composed primarily of disulfide linked trimers (chains A, B, and C) and monomers (chain D).

The protein is Extracellular globin-1 of Lumbricus terrestris (Common earthworm).